Here is an 83-residue protein sequence, read N- to C-terminus: MKGSAFAIILGLVVLCACSFAEDEQDQFASPNELLRSMFLESRHELIPEVEGRYCQKWMWTCDSERKCCEGYVCELWCKYNMG.

A signal peptide spans 1-21 (MKGSAFAIILGLVVLCACSFA). The propeptide occupies 22 to 53 (EDEQDQFASPNELLRSMFLESRHELIPEVEGR). Disulfide bonds link Cys-55–Cys-69, Cys-62–Cys-74, and Cys-68–Cys-78.

It belongs to the neurotoxin 30 (phrixotoxin) family. As to expression, expressed by the venom gland.

The protein localises to the secreted. Probable ion channel inhibitor. The sequence is that of Kappa-theraphotoxin-Cg2b from Chilobrachys guangxiensis (Chinese earth tiger tarantula).